The chain runs to 317 residues: tRNA dimethylallyltransferase (317 aa).

14–21 contributes to the ATP binding site; it reads GPTASGKT. 16–21 is a binding site for substrate; it reads TASGKT. Interaction with substrate tRNA stretches follow at residues 39-42, 163-167, and 248-253; these read DSAL, QRIQR, and RCVGYR.

It belongs to the IPP transferase family. In terms of assembly, monomer. Requires Mg(2+) as cofactor.

It catalyses the reaction adenosine(37) in tRNA + dimethylallyl diphosphate = N(6)-dimethylallyladenosine(37) in tRNA + diphosphate. Its function is as follows. Catalyzes the transfer of a dimethylallyl group onto the adenine at position 37 in tRNAs that read codons beginning with uridine, leading to the formation of N6-(dimethylallyl)adenosine (i(6)A). This Paraburkholderia phymatum (strain DSM 17167 / CIP 108236 / LMG 21445 / STM815) (Burkholderia phymatum) protein is tRNA dimethylallyltransferase.